A 160-amino-acid polypeptide reads, in one-letter code: Arginine repressor (160 aa).

This sequence belongs to the ArgR family.

The protein resides in the cytoplasm. The protein operates within amino-acid biosynthesis; L-arginine biosynthesis [regulation]. Functionally, regulates arginine biosynthesis genes. The protein is Arginine repressor of Anaeromyxobacter dehalogenans (strain 2CP-1 / ATCC BAA-258).